We begin with the raw amino-acid sequence, 1412 residues long: DNA-directed RNA polymerase subunit beta' (1412 aa).

Zn(2+) contacts are provided by Cys-70, Cys-72, Cys-85, and Cys-88. Mg(2+) is bound by residues Asp-460, Asp-462, and Asp-464. Zn(2+)-binding residues include Cys-819, Cys-893, Cys-900, and Cys-903. A disordered region spans residues 1391-1412 (AEESFEFGTPETPAAEQQHSGE).

Belongs to the RNA polymerase beta' chain family. In terms of assembly, the RNAP catalytic core consists of 2 alpha, 1 beta, 1 beta' and 1 omega subunit. When a sigma factor is associated with the core the holoenzyme is formed, which can initiate transcription. It depends on Mg(2+) as a cofactor. Zn(2+) is required as a cofactor.

It carries out the reaction RNA(n) + a ribonucleoside 5'-triphosphate = RNA(n+1) + diphosphate. In terms of biological role, DNA-dependent RNA polymerase catalyzes the transcription of DNA into RNA using the four ribonucleoside triphosphates as substrates. This is DNA-directed RNA polymerase subunit beta' from Paraburkholderia xenovorans (strain LB400).